We begin with the raw amino-acid sequence, 285 residues long: Pseudouridine-5'-phosphate glycosidase (285 aa).

Catalysis depends on glutamate 17, which acts as the Proton donor. Positions 77 and 97 each coordinate substrate. A Mn(2+)-binding site is contributed by aspartate 126. 128 to 130 (SQD) is a substrate binding site. The active-site Nucleophile is lysine 147.

Belongs to the pseudouridine-5'-phosphate glycosidase family. As to quaternary structure, homotrimer. Requires Mn(2+) as cofactor.

The enzyme catalyses D-ribose 5-phosphate + uracil = psi-UMP + H2O. Catalyzes the reversible cleavage of pseudouridine 5'-phosphate (PsiMP) to ribose 5-phosphate and uracil. Functions biologically in the cleavage direction, as part of a pseudouridine degradation pathway. This chain is Pseudouridine-5'-phosphate glycosidase, found in Thermotoga sp. (strain RQ2).